Reading from the N-terminus, the 118-residue chain is Holin-like protein CidA 2 (118 aa).

4 helical membrane passes run 4–26 (VTLLLQVGVLYVFSLVGTWIQGV), 33–52 (GSLIGMLILFLLLSTRVLPL), 62–84 (LIVFLPLFLIPSTTGLMEYGSFL), and 91–113 (IFLLVVASTVVTLIVSGYISQLL).

Belongs to the CidA/LrgA family. CidA subfamily.

The protein resides in the cell membrane. Its function is as follows. Increases the activity of extracellular murein hydrolases possibly by mediating their export via hole formation. Inhibited by the antiholin-like proteins LrgAB. In an unstressed cell, the LrgAB products probably inhibit the function of the CidA protein. When a cell is stressed by the addition of antibiotics or by other factors in the environment, CidA possibly oligomerizes within the bacterial cell membrane, creating lesions that disrupt the proton motive force, which in turn results in loss of cell viability. These lesions are also hypothesized to regulate the subsequent cell lysis by either allowing the murein hydrolases access to the cell wall substrate and/or regulating their activity by a possible change in the cell wall pH that results from loss of membrane potential. The protein is Holin-like protein CidA 2 (cidA2) of Bacillus cereus (strain ATCC 14579 / DSM 31 / CCUG 7414 / JCM 2152 / NBRC 15305 / NCIMB 9373 / NCTC 2599 / NRRL B-3711).